A 312-amino-acid polypeptide reads, in one-letter code: Beta-ketoacyl-[acyl-carrier-protein] synthase III (312 aa).

Residues Cys112 and His237 contribute to the active site. An ACP-binding region spans residues 238–242 (QANIR). Asn267 is a catalytic residue.

It belongs to the thiolase-like superfamily. FabH family. As to quaternary structure, homodimer.

Its subcellular location is the cytoplasm. It carries out the reaction malonyl-[ACP] + acetyl-CoA + H(+) = 3-oxobutanoyl-[ACP] + CO2 + CoA. It functions in the pathway lipid metabolism; fatty acid biosynthesis. Functionally, catalyzes the condensation reaction of fatty acid synthesis by the addition to an acyl acceptor of two carbons from malonyl-ACP. Catalyzes the first condensation reaction which initiates fatty acid synthesis and may therefore play a role in governing the total rate of fatty acid production. Possesses both acetoacetyl-ACP synthase and acetyl transacylase activities. Its substrate specificity determines the biosynthesis of branched-chain and/or straight-chain of fatty acids. The sequence is that of Beta-ketoacyl-[acyl-carrier-protein] synthase III from Listeria innocua serovar 6a (strain ATCC BAA-680 / CLIP 11262).